Reading from the N-terminus, the 281-residue chain is MAVKHYKPVTNGRRNMSSLDYSKNLSGHAPEKSLLVILKKNSGRNNQGKITVRHQGGRVKRYYRIIDFKRNKDDIPATVKSIEYDPNRSANICLLAYADGEKRYILAPEGIKVGQKVVSGNNVDILVGNSLPLSNIPEGTFVHNVEMQPGGGGIIARSAGTSAQILGKDDDGKYVVLRLKSGEMRRILARCRATIGTVGNGEHSLVLLGKAGRSRHLGVRPTVRGSVMNPIDHPHGGGVSKQPIGRKAPLTPWGKKALGVKTRKTKKSSTKLILRRRKDSK.

Disordered stretches follow at residues 1–23 (MAVK…DYSK) and 224–281 (RGSV…KDSK). Residues 12–23 (GRRNMSSLDYSK) are compositionally biased toward polar residues. The segment covering 261–281 (KTRKTKKSSTKLILRRRKDSK) has biased composition (basic residues).

This sequence belongs to the universal ribosomal protein uL2 family. In terms of assembly, part of the 50S ribosomal subunit. Forms a bridge to the 30S subunit in the 70S ribosome.

Its function is as follows. One of the primary rRNA binding proteins. Required for association of the 30S and 50S subunits to form the 70S ribosome, for tRNA binding and peptide bond formation. It has been suggested to have peptidyltransferase activity; this is somewhat controversial. Makes several contacts with the 16S rRNA in the 70S ribosome. The chain is Large ribosomal subunit protein uL2 from Mycoplasmopsis agalactiae (strain NCTC 10123 / CIP 59.7 / PG2) (Mycoplasma agalactiae).